Reading from the N-terminus, the 211-residue chain is Bcl-2 homologous antagonist/killer (211 aa).

Positions 1-28 (MASGQGPGPPRQECGEPALPSASEEQVA) are disordered. An N-acetylalanine modification is found at Ala2. A BH3 motif is present at residues 74 to 88 (VGRQLAIIGDDINRR). The short motif at 117–136 (SLFESGINWGRVVALLGFGY) is the BH1 element. Residues Asp160 and His164 each coordinate Zn(2+). A BH2 motif is present at residues 169-184 (RWIAQRGGWVAALNLG). A helical membrane pass occupies residues 188 to 205 (ILNVLVVLGVVLLGQFVV).

It belongs to the Bcl-2 family. In terms of assembly, homodimer. Formation of the homodimer is zinc-dependent. Forms heterodimers with BCL2 and BCL2L1 isoform Bcl-X(L). Forms heterooligomers with BAX. Interacts with BCL2A1. Interacts with RTL10/BOP. Interacts with VDAC1. Interacts with GIMAP3/IAN4 and GIMAP5/IAN5. (Microbial infection) Interacts with vaccinia virus protein F1. As to quaternary structure, (Microbial infection) Interacts with myxoma virus protein M11L. In terms of assembly, (Microbial infection) Interacts with Epstein-Barr virus protein BALF1. (Microbial infection) Interacts with adenovirus protein E1B 19K. Expressed in a wide variety of tissues, with highest levels in the heart and skeletal muscle.

It is found in the mitochondrion outer membrane. In terms of biological role, plays a role in the mitochondrial apoptotic process. Upon arrival of cell death signals, promotes mitochondrial outer membrane (MOM) permeabilization by oligomerizing to form pores within the MOM. This releases apoptogenic factors into the cytosol, including cytochrome c, promoting the activation of caspase 9 which in turn processes and activates the effector caspases. The protein is Bcl-2 homologous antagonist/killer (BAK1) of Homo sapiens (Human).